Here is a 535-residue protein sequence, read N- to C-terminus: Hrp65 protein (535 aa).

Residues 1-80 (MDVKAEAPNG…GMGPRGPMKN (80 aa)) form a disordered region. Low complexity-rich tracts occupy residues 27 to 42 (ENMN…QNNN) and 50 to 64 (NKRN…FQNR). The span at 65–74 (GGKGGPGMGP) shows a compositional bias: gly residues. RRM domains lie at 113 to 185 (NRLY…FAPN) and 187 to 268 (TTIR…TFDH). Disordered regions lie at residues 346–411 (EHET…RRQQ) and 429–535 (QEMN…RRRY). Residues 434–459 (QGGGGGGGNGGNGNNQGGGGNQGGGR) show a composition bias toward gly residues. The segment covering 486–502 (GNQYQGNQHYQGNQDQG) has biased composition (low complexity). Residues 521-535 (DRGHRDDFQNKRRRY) are compositionally biased toward basic and acidic residues.

It localises to the cytoplasm. The protein resides in the cytoskeleton. Its subcellular location is the nucleus. In terms of biological role, component of nuclear connecting fibers associated with the transport of ribonucleoprotein particles from either the chromosome to the nuclear pore complex or their transient retention in the nucleoplasm. This Chironomus tentans (Midge) protein is Hrp65 protein (HRP65).